The following is a 132-amino-acid chain: MSMTDPIADMLTRIRNASMAKLQKVDIPSSNLKVSLANVLKAEGFIKNFKVIADNKQGVLRVYLRFIDEKEPVIREIKRVSKPGSRVYVGSDEIPSVKSGMGVAILSTSKGILTDKVAREAGVGGEVICTVW.

This sequence belongs to the universal ribosomal protein uS8 family. Part of the 30S ribosomal subunit. Contacts proteins S5 and S12.

Its function is as follows. One of the primary rRNA binding proteins, it binds directly to 16S rRNA central domain where it helps coordinate assembly of the platform of the 30S subunit. This chain is Small ribosomal subunit protein uS8, found in Geobacter metallireducens (strain ATCC 53774 / DSM 7210 / GS-15).